Here is a 113-residue protein sequence, read N- to C-terminus: Large ribosomal subunit protein eL33 (113 aa).

It belongs to the eukaryotic ribosomal protein eL33 family.

The chain is Large ribosomal subunit protein eL33 (RPL35A) from Tetrahymena thermophila (strain SB210).